A 262-amino-acid polypeptide reads, in one-letter code: Kallikrein-1 (262 aa).

Residues 1–18 (MWFLVLCLALSLGGTGAA) form the signal peptide. The propeptide at 19–24 (PPIQSR) is activation peptide. The Peptidase S1 domain maps to 25-259 (IVGGWECEQH…YVKWIEDTIA (235 aa)). 5 cysteine pairs are disulfide-bonded: cysteine 31–cysteine 174, cysteine 50–cysteine 66, cysteine 153–cysteine 220, cysteine 185–cysteine 199, and cysteine 210–cysteine 235. The Charge relay system role is filled by histidine 65. The O-linked (GalNAc...) serine glycan is linked to serine 93. N-linked (GlcNAc...) asparagine glycosylation is present at asparagine 102. Serine 104 is a glycosylation site (O-linked (GalNAc...) serine). The N-linked (GlcNAc...) asparagine glycan is linked to asparagine 108. Aspartate 120 functions as the Charge relay system in the catalytic mechanism. The N-linked (GlcNAc...) asparagine; partial glycan is linked to asparagine 165. The O-linked (GalNAc...) serine glycan is linked to serine 167. Serine 214 serves as the catalytic Charge relay system.

It belongs to the peptidase S1 family. Kallikrein subfamily. The O-linked polysaccharides on Ser-93, Ser-104 and Ser-167 are probably the mucin type linked to GalNAc. In PubMed:3163150, GalNAc was detected with the corresponding peptides but not located. In terms of tissue distribution, isoform 2 is expressed in pancreas, salivary glands, kidney, colon, prostate gland, testis, spleen and the colon adenocarcinoma cell line T84.

It catalyses the reaction Preferential cleavage of Arg-|-Xaa bonds in small molecule substrates. Highly selective action to release kallidin (lysyl-bradykinin) from kininogen involves hydrolysis of Met-|-Xaa or Leu-|-Xaa.. Its function is as follows. Glandular kallikreins cleave Met-Lys and Arg-Ser bonds in kininogen to release Lys-bradykinin. (Microbial infection) Cleaves Neisseria meningitidis NHBA in saliva; Neisseria is an obligate commensal of the nasopharyngeal mucosa. The protein is Kallikrein-1 (KLK1) of Homo sapiens (Human).